A 148-amino-acid chain; its full sequence is Arginine repressor (148 aa).

It belongs to the ArgR family.

Its subcellular location is the cytoplasm. It functions in the pathway amino-acid biosynthesis; L-arginine biosynthesis [regulation]. Regulates arginine biosynthesis genes. The protein is Arginine repressor of Pelodictyon phaeoclathratiforme (strain DSM 5477 / BU-1).